The primary structure comprises 175 residues: Tumor necrosis factor receptor superfamily member 13C (175 aa).

The Extracellular segment spans residues 1–71 (MGARRLRVRS…EGSALRPDVA (71 aa)). The TNFR-Cys; truncated repeat unit spans residues 21–38 (QCNQTECFDPLVRNCVSC). 2 disulfides stabilise this stretch: C22/C35 and C27/C38. Residue N23 is glycosylated (N-linked (GlcNAc...) asparagine). Positions 29–34 (DPLVRN) are essential for TNFSF13B/TALL1/BAFF/BLyS binding. The helical; Signal-anchor for type III membrane protein transmembrane segment at 72–92 (LLVGAPALLGLILALTLVGLV) threads the bilayer. Residues 93 to 175 (SLVSWRWRQQ…VTTKTAGPEQ (83 aa)) are Cytoplasmic-facing. A disordered region spans residues 124-175 (VPSSETPHASAPTWPPLKEDADSALPRHSVPVPATELGSTELVTTKTAGPEQ). The segment covering 160–175 (LGSTELVTTKTAGPEQ) has biased composition (polar residues).

Highly expressed in spleen and testis; detected at lower levels in lung and thymus.

Its subcellular location is the membrane. Its function is as follows. B-cell receptor specific for TNFSF13B/TALL1/BAFF/BLyS. Promotes the survival of mature B-cells and the B-cell response. The chain is Tumor necrosis factor receptor superfamily member 13C (Tnfrsf13c) from Mus musculus (Mouse).